An 88-amino-acid polypeptide reads, in one-letter code: Protein WIR1A (88 aa).

Over 1–13 the chain is Cytoplasmic; it reads MASLGSSAGGRRP. The helical transmembrane segment at 14-35 threads the bilayer; sequence TVLLQIALFVVVAAIIINSSVC. Residues 36 to 88 are Extracellular-facing; it reads LGATAVHDAAASGTGALDPNVPAVPTPGGAGQPYTGRGCRTVYGCRPPAGGQP.

The protein resides in the membrane. Functionally, associated with pathogen defense. In Triticum aestivum (Wheat), this protein is Protein WIR1A (WIR1A).